The sequence spans 145 residues: uncharacterized protein (145 aa).

To R.meliloti R00649.

This is an uncharacterized protein from Agrobacterium fabrum (strain C58 / ATCC 33970) (Agrobacterium tumefaciens (strain C58)).